Reading from the N-terminus, the 540-residue chain is Glucose-6-phosphate isomerase (540 aa).

E351 (proton donor) is an active-site residue. Catalysis depends on residues H382 and K506.

This sequence belongs to the GPI family.

The protein resides in the cytoplasm. The enzyme catalyses alpha-D-glucose 6-phosphate = beta-D-fructose 6-phosphate. It functions in the pathway carbohydrate biosynthesis; gluconeogenesis. Its pathway is carbohydrate degradation; glycolysis; D-glyceraldehyde 3-phosphate and glycerone phosphate from D-glucose: step 2/4. Its function is as follows. Catalyzes the reversible isomerization of glucose-6-phosphate to fructose-6-phosphate. The chain is Glucose-6-phosphate isomerase from Corynebacterium glutamicum (strain R).